Consider the following 642-residue polypeptide: Chaperone protein DnaK (642 aa).

Thr200 is modified (phosphothreonine; by autocatalysis). A compositionally biased stretch (low complexity) spans 603–623 (AAAAEQGGNADAASGNAQASK). Positions 603–627 (AAAAEQGGNADAASGNAQASKAADD) are disordered.

It belongs to the heat shock protein 70 family.

Functionally, acts as a chaperone. This chain is Chaperone protein DnaK, found in Xanthomonas campestris pv. campestris (strain B100).